We begin with the raw amino-acid sequence, 253 residues long: Triosephosphate isomerase (253 aa).

Residue 9–11 (NWK) coordinates substrate. The active-site Electrophile is H97. E169 acts as the Proton acceptor in catalysis. Substrate is bound by residues G175, S215, and 236 to 237 (GG).

Belongs to the triosephosphate isomerase family. As to quaternary structure, homodimer.

It localises to the cytoplasm. The catalysed reaction is D-glyceraldehyde 3-phosphate = dihydroxyacetone phosphate. The protein operates within carbohydrate biosynthesis; gluconeogenesis. Its pathway is carbohydrate degradation; glycolysis; D-glyceraldehyde 3-phosphate from glycerone phosphate: step 1/1. Involved in the gluconeogenesis. Catalyzes stereospecifically the conversion of dihydroxyacetone phosphate (DHAP) to D-glyceraldehyde-3-phosphate (G3P). The polypeptide is Triosephosphate isomerase (Staphylococcus aureus (strain Mu50 / ATCC 700699)).